The primary structure comprises 155 residues: RNA pyrophosphohydrolase (155 aa).

The region spanning 5 to 147 (KYRPNVAAII…KRQVYRQVIA (143 aa)) is the Nudix hydrolase domain. The short motif at 42 to 63 (GGIDEGETPLEALHRELLEEIG) is the Nudix box element.

The protein belongs to the Nudix hydrolase family. RppH subfamily. A divalent metal cation is required as a cofactor.

In terms of biological role, accelerates the degradation of transcripts by removing pyrophosphate from the 5'-end of triphosphorylated RNA, leading to a more labile monophosphorylated state that can stimulate subsequent ribonuclease cleavage. In Helicobacter pylori (strain ATCC 700392 / 26695) (Campylobacter pylori), this protein is RNA pyrophosphohydrolase.